The primary structure comprises 253 residues: Tryptophan synthase alpha chain (253 aa).

Residues Glu-45 and Asp-56 each act as proton acceptor in the active site.

This sequence belongs to the TrpA family. Tetramer of two alpha and two beta chains.

The catalysed reaction is (1S,2R)-1-C-(indol-3-yl)glycerol 3-phosphate + L-serine = D-glyceraldehyde 3-phosphate + L-tryptophan + H2O. It participates in amino-acid biosynthesis; L-tryptophan biosynthesis; L-tryptophan from chorismate: step 5/5. Functionally, the alpha subunit is responsible for the aldol cleavage of indoleglycerol phosphate to indole and glyceraldehyde 3-phosphate. This is Tryptophan synthase alpha chain from Flavobacterium psychrophilum (strain ATCC 49511 / DSM 21280 / CIP 103535 / JIP02/86).